We begin with the raw amino-acid sequence, 485 residues long: D-alanine--D-alanyl carrier protein ligase (485 aa).

ATP is bound at residue 144-145 (TS). Residue Asp-189 coordinates D-alanine. 284 to 289 (NTYGPT) is a binding site for ATP. A D-alanine-binding site is contributed by Val-293. Residues Asp-365 and Lys-473 each coordinate ATP. Residue Lys-473 participates in D-alanine binding.

It belongs to the ATP-dependent AMP-binding enzyme family. DltA subfamily.

The protein localises to the cytoplasm. It catalyses the reaction holo-[D-alanyl-carrier protein] + D-alanine + ATP = D-alanyl-[D-alanyl-carrier protein] + AMP + diphosphate. Its pathway is cell wall biogenesis; lipoteichoic acid biosynthesis. Functionally, catalyzes the first step in the D-alanylation of lipoteichoic acid (LTA), the activation of D-alanine and its transfer onto the D-alanyl carrier protein (Dcp) DltC. In an ATP-dependent two-step reaction, forms a high energy D-alanyl-AMP intermediate, followed by transfer of the D-alanyl residue as a thiol ester to the phosphopantheinyl prosthetic group of the Dcp. D-alanylation of LTA plays an important role in modulating the properties of the cell wall in Gram-positive bacteria, influencing the net charge of the cell wall. This is D-alanine--D-alanyl carrier protein ligase from Staphylococcus aureus (strain MRSA252).